The sequence spans 117 residues: Large ribosomal subunit protein bL31B (117 aa).

The segment at 75–117 is disordered; it reads KRFERKKEASPADTPPESDSTTENASVEKKAEKKRVTAKGSKK. The segment covering 100-109 has biased composition (basic and acidic residues); it reads SVEKKAEKKR.

It belongs to the bacterial ribosomal protein bL31 family. Type B subfamily. In terms of assembly, part of the 50S ribosomal subunit.

The chain is Large ribosomal subunit protein bL31B from Protochlamydia amoebophila (strain UWE25).